Here is a 395-residue protein sequence, read N- to C-terminus: Putative gustatory receptor 93b (395 aa).

The Cytoplasmic segment spans residues methionine 1 to arginine 18. Residues isoleucine 19 to phenylalanine 39 form a helical membrane-spanning segment. The Extracellular segment spans residues arginine 40–alanine 89. A helical transmembrane segment spans residues phenylalanine 90–phenylalanine 110. At tryptophan 111 to lysine 153 the chain is on the cytoplasmic side. The helical transmembrane segment at valine 154 to leucine 174 threads the bilayer. At threonine 175–serine 183 the chain is on the extracellular side. Residues valine 184–tyrosine 204 form a helical membrane-spanning segment. The Cytoplasmic portion of the chain corresponds to arginine 205–proline 267. Residues leucine 268–leucine 288 traverse the membrane as a helical segment. Over arginine 289 to serine 293 the chain is Extracellular. A helical membrane pass occupies residues phenylalanine 294–valine 314. Over histidine 315–glutamate 369 the chain is Cytoplasmic. The chain crosses the membrane as a helical span at residues leucine 370–methionine 390. At glutamine 391 to isoleucine 395 the chain is on the extracellular side.

The protein belongs to the insect chemoreceptor superfamily. Gustatory receptor (GR) family. Gr93a subfamily. In larvae, is expressed in neurons of the terminal external chemosensory organ and of the dorsal pharyngeal sense organ.

The protein localises to the cell membrane. Functionally, probable gustatory receptor which mediates acceptance or avoidance behavior, depending on its substrates. The sequence is that of Putative gustatory receptor 93b (Gr93b) from Drosophila melanogaster (Fruit fly).